We begin with the raw amino-acid sequence, 101 residues long: NADH-quinone oxidoreductase subunit K (101 aa).

3 helical membrane-spanning segments follow: residues 4-24, 30-50, and 61-81; these read LGYF…GIII, IVLL…FIAF, and IFVF…LAIL.

It belongs to the complex I subunit 4L family. As to quaternary structure, NDH-1 is composed of 14 different subunits. Subunits NuoA, H, J, K, L, M, N constitute the membrane sector of the complex.

The protein resides in the cell inner membrane. The enzyme catalyses a quinone + NADH + 5 H(+)(in) = a quinol + NAD(+) + 4 H(+)(out). In terms of biological role, NDH-1 shuttles electrons from NADH, via FMN and iron-sulfur (Fe-S) centers, to quinones in the respiratory chain. The immediate electron acceptor for the enzyme in this species is believed to be ubiquinone. Couples the redox reaction to proton translocation (for every two electrons transferred, four hydrogen ions are translocated across the cytoplasmic membrane), and thus conserves the redox energy in a proton gradient. This is NADH-quinone oxidoreductase subunit K from Coxiella burnetii (strain CbuG_Q212) (Coxiella burnetii (strain Q212)).